A 165-amino-acid chain; its full sequence is Endoribonuclease YbeY (165 aa).

Zn(2+)-binding residues include H130, H134, and H140.

It belongs to the endoribonuclease YbeY family. The cofactor is Zn(2+).

The protein localises to the cytoplasm. Single strand-specific metallo-endoribonuclease involved in late-stage 70S ribosome quality control and in maturation of the 3' terminus of the 16S rRNA. This is Endoribonuclease YbeY from Streptococcus suis (strain 98HAH33).